The primary structure comprises 213 residues: CDP-diacylglycerol--inositol 3-phosphatidyltransferase (213 aa).

The Cytoplasmic segment spans residues M1–N5. Residues I6–F26 traverse the membrane as a helical segment. Residue Y27 is a topological domain, lumenal. Residues F28 to A48 traverse the membrane as a helical segment. The Mg(2+) site is built by D47 and D50. Topologically, residues F49–R73 are cytoplasmic. Residues G51, R55, and T61 each contribute to the a CDP-1,2-diacyl-sn-glycerol site. Residues D68 and D72 each coordinate Mg(2+). D72 serves as the catalytic Proton acceptor. The helical transmembrane segment at C74–F94 threads the bilayer. A topological domain (lumenal) is located at residue Q95. Residues I96–G116 traverse the membrane as a helical segment. The Cytoplasmic segment spans residues S117–P139. The chain crosses the membrane as a helical span at residues A140–F160. Residues S161 to M174 lie on the Lumenal side of the membrane. The helical transmembrane segment at G175–I195 threads the bilayer. Residues T196–K213 are Cytoplasmic-facing.

The protein belongs to the CDP-alcohol phosphatidyltransferase class-I family. Requires Mn(2+) as cofactor. The cofactor is Mg(2+). Detected in placenta (at protein level). Widely expressed. Higher expression in adult liver and skeletal muscle, slightly lower levels seen in pancreas, kidney, lung, placenta, brain, heart, leukocyte, colon, small intestine, ovary, testis, prostate, thymus and spleen. In fetus, expressed in kidney, liver, lung and brain.

The protein resides in the endoplasmic reticulum membrane. It is found in the cell membrane. The enzyme catalyses a CDP-1,2-diacyl-sn-glycerol + myo-inositol = a 1,2-diacyl-sn-glycero-3-phospho-(1D-myo-inositol) + CMP + H(+). Its activity is regulated as follows. Inhibited by PtdIns (product inhibition), phosphatidylinositol phosphate, and nucleoside di- and tri-phosphates. Its function is as follows. Catalyzes the biosynthesis of phosphatidylinositol (PtdIns) as well as PtdIns:inositol exchange reaction. May thus act to reduce an excessive cellular PtdIns content. The exchange activity is due to the reverse reaction of PtdIns synthase and is dependent on CMP, which is tightly bound to the enzyme. In Homo sapiens (Human), this protein is CDP-diacylglycerol--inositol 3-phosphatidyltransferase.